Here is a 37-residue protein sequence, read N- to C-terminus: U10-ctenitoxin-Co1a (37 aa).

Intrachain disulfides connect cysteine 2–cysteine 17, cysteine 9–cysteine 22, cysteine 16–cysteine 33, and cysteine 24–cysteine 31.

In terms of tissue distribution, expressed by the venom gland.

The protein resides in the secreted. Antagonist of L-type calcium channels (Cav1/CACNA1). In Ctenus ornatus (Brazilian spider), this protein is U10-ctenitoxin-Co1a.